The following is a 109-amino-acid chain: Protein reprimo (109 aa).

N-linked (GlcNAc...) asparagine glycosylation is found at N7 and N18. A helical membrane pass occupies residues 56-76 (VVQIAVMCVLSLTVVFGIFFL). S98 carries the post-translational modification Phosphoserine.

The protein belongs to the reprimo family.

Its subcellular location is the cytoplasm. It is found in the membrane. Functionally, may be involved in the regulation of p53-dependent G2 arrest of the cell cycle. Seems to induce cell cycle arrest by inhibiting CDK1 activity and nuclear translocation of the CDC2 cyclin B1 complex. The polypeptide is Protein reprimo (RPRM) (Bos taurus (Bovine)).